Reading from the N-terminus, the 448-residue chain is Beta-glucosidase A (448 aa).

Glu166 functions as the Proton donor in the catalytic mechanism. Glu355 (nucleophile) is an active-site residue.

It belongs to the glycosyl hydrolase 1 family.

It carries out the reaction Hydrolysis of terminal, non-reducing beta-D-glucosyl residues with release of beta-D-glucose.. It participates in glycan metabolism; cellulose degradation. The polypeptide is Beta-glucosidase A (bglA) (Acetivibrio thermocellus (strain ATCC 27405 / DSM 1237 / JCM 9322 / NBRC 103400 / NCIMB 10682 / NRRL B-4536 / VPI 7372) (Clostridium thermocellum)).